We begin with the raw amino-acid sequence, 187 residues long: Peptide deformylase (187 aa).

Residues Cys-94 and His-136 each contribute to the Fe cation site. Glu-137 is a catalytic residue. His-140 provides a ligand contact to Fe cation.

The protein belongs to the polypeptide deformylase family. It depends on Fe(2+) as a cofactor.

The catalysed reaction is N-terminal N-formyl-L-methionyl-[peptide] + H2O = N-terminal L-methionyl-[peptide] + formate. In terms of biological role, removes the formyl group from the N-terminal Met of newly synthesized proteins. Requires at least a dipeptide for an efficient rate of reaction. N-terminal L-methionine is a prerequisite for activity but the enzyme has broad specificity at other positions. The chain is Peptide deformylase from Chlorobaculum tepidum (strain ATCC 49652 / DSM 12025 / NBRC 103806 / TLS) (Chlorobium tepidum).